We begin with the raw amino-acid sequence, 215 residues long: Cytochrome c biogenesis ATP-binding export protein CcmA (215 aa).

Positions 3–211 constitute an ABC transporter domain; the sequence is LTAENLAARR…KMTGFAGVDR (209 aa). 35–42 serves as a coordination point for ATP; the sequence is GRNGSGKS.

Belongs to the ABC transporter superfamily. CcmA exporter (TC 3.A.1.107) family. In terms of assembly, the complex is composed of two ATP-binding proteins (CcmA) and two transmembrane proteins (CcmB).

Its subcellular location is the cell inner membrane. It carries out the reaction heme b(in) + ATP + H2O = heme b(out) + ADP + phosphate + H(+). In terms of biological role, part of the ABC transporter complex CcmAB involved in the biogenesis of c-type cytochromes; once thought to export heme, this seems not to be the case, but its exact role is uncertain. Responsible for energy coupling to the transport system. The sequence is that of Cytochrome c biogenesis ATP-binding export protein CcmA from Rhizobium etli (strain ATCC 51251 / DSM 11541 / JCM 21823 / NBRC 15573 / CFN 42).